Consider the following 359-residue polypeptide: Phospho-N-acetylmuramoyl-pentapeptide-transferase (359 aa).

10 consecutive transmembrane segments (helical) span residues 3–23 (LILI…PALI), 55–75 (VAIL…GMAM), 80–100 (PSAS…VGFI), 117–137 (TAKT…ALQF), 156–176 (IATV…VVSA), 187–207 (LDGL…LITF), 231–251 (LALV…WNAA), 255–275 (IFMG…ISVT), 280–300 (ILAV…VVQI), and 334–354 (FWLL…GEWL).

The protein belongs to the glycosyltransferase 4 family. MraY subfamily. Requires Mg(2+) as cofactor.

It is found in the cell membrane. It carries out the reaction UDP-N-acetyl-alpha-D-muramoyl-L-alanyl-gamma-D-glutamyl-meso-2,6-diaminopimeloyl-D-alanyl-D-alanine + di-trans,octa-cis-undecaprenyl phosphate = di-trans,octa-cis-undecaprenyl diphospho-N-acetyl-alpha-D-muramoyl-L-alanyl-D-glutamyl-meso-2,6-diaminopimeloyl-D-alanyl-D-alanine + UMP. The protein operates within cell wall biogenesis; peptidoglycan biosynthesis. Catalyzes the initial step of the lipid cycle reactions in the biosynthesis of the cell wall peptidoglycan: transfers peptidoglycan precursor phospho-MurNAc-pentapeptide from UDP-MurNAc-pentapeptide onto the lipid carrier undecaprenyl phosphate, yielding undecaprenyl-pyrophosphoryl-MurNAc-pentapeptide, known as lipid I. In Mycolicibacterium smegmatis (strain ATCC 700084 / mc(2)155) (Mycobacterium smegmatis), this protein is Phospho-N-acetylmuramoyl-pentapeptide-transferase.